The following is a 116-amino-acid chain: Non-specific lipid-transfer protein D, cotyledon-specific isoform (116 aa).

An N-terminal signal peptide occupies residues 1–24 (MKNIFFSVFFLLSFLLCLANVSEA). Intrachain disulfides connect C28/C76, C38/C53, C54/C98, and C74/C112.

It belongs to the plant LTP family.

Functionally, plant non-specific lipid-transfer proteins transfer phospholipids as well as galactolipids across membranes. May play a role in wax or cutin deposition in the cell walls of expanding epidermal cells and certain secretory tissues. This Ricinus communis (Castor bean) protein is Non-specific lipid-transfer protein D, cotyledon-specific isoform.